The following is a 137-amino-acid chain: Holo-[acyl-carrier-protein] synthase (137 aa).

The Mg(2+) site is built by Asp-8 and Glu-58.

The protein belongs to the P-Pant transferase superfamily. AcpS family. Requires Mg(2+) as cofactor.

It is found in the cytoplasm. The enzyme catalyses apo-[ACP] + CoA = holo-[ACP] + adenosine 3',5'-bisphosphate + H(+). Its function is as follows. Transfers the 4'-phosphopantetheine moiety from coenzyme A to a Ser of acyl-carrier-protein. The chain is Holo-[acyl-carrier-protein] synthase from Lactobacillus delbrueckii subsp. bulgaricus (strain ATCC 11842 / DSM 20081 / BCRC 10696 / JCM 1002 / NBRC 13953 / NCIMB 11778 / NCTC 12712 / WDCM 00102 / Lb 14).